We begin with the raw amino-acid sequence, 37 residues long: Large ribosomal subunit protein bL36 (37 aa).

It belongs to the bacterial ribosomal protein bL36 family.

The polypeptide is Large ribosomal subunit protein bL36 (Nocardioides sp. (strain ATCC BAA-499 / JS614)).